The following is a 267-amino-acid chain: 3-methyl-2-oxobutanoate hydroxymethyltransferase (267 aa).

Mg(2+)-binding residues include D46 and D85. 3-methyl-2-oxobutanoate contacts are provided by residues 46 to 47 (DS), D85, and K115. A Mg(2+)-binding site is contributed by E117. Catalysis depends on E184, which acts as the Proton acceptor.

Belongs to the PanB family. Homodecamer; pentamer of dimers. Requires Mg(2+) as cofactor.

Its subcellular location is the cytoplasm. It catalyses the reaction 3-methyl-2-oxobutanoate + (6R)-5,10-methylene-5,6,7,8-tetrahydrofolate + H2O = 2-dehydropantoate + (6S)-5,6,7,8-tetrahydrofolate. The protein operates within cofactor biosynthesis; (R)-pantothenate biosynthesis; (R)-pantoate from 3-methyl-2-oxobutanoate: step 1/2. In terms of biological role, catalyzes the reversible reaction in which hydroxymethyl group from 5,10-methylenetetrahydrofolate is transferred onto alpha-ketoisovalerate to form ketopantoate. This is 3-methyl-2-oxobutanoate hydroxymethyltransferase from Geotalea daltonii (strain DSM 22248 / JCM 15807 / FRC-32) (Geobacter daltonii).